A 671-amino-acid polypeptide reads, in one-letter code: DNA ligase (671 aa).

NAD(+)-binding positions include 34–38, 83–84, and E117; these read DAEYD and SL. K119 acts as the N6-AMP-lysine intermediate in catalysis. 4 residues coordinate NAD(+): R140, E177, K293, and K317. Zn(2+) is bound by residues C411, C414, C429, and C434. A BRCT domain is found at 591–671; sequence KVGGKFTGKT…EFLQMLEGEQ (81 aa).

This sequence belongs to the NAD-dependent DNA ligase family. LigA subfamily. It depends on Mg(2+) as a cofactor. Mn(2+) is required as a cofactor.

The catalysed reaction is NAD(+) + (deoxyribonucleotide)n-3'-hydroxyl + 5'-phospho-(deoxyribonucleotide)m = (deoxyribonucleotide)n+m + AMP + beta-nicotinamide D-nucleotide.. Its function is as follows. DNA ligase that catalyzes the formation of phosphodiester linkages between 5'-phosphoryl and 3'-hydroxyl groups in double-stranded DNA using NAD as a coenzyme and as the energy source for the reaction. It is essential for DNA replication and repair of damaged DNA. This is DNA ligase from Geobacter metallireducens (strain ATCC 53774 / DSM 7210 / GS-15).